Reading from the N-terminus, the 191-residue chain is Molybdenum cofactor guanylyltransferase (191 aa).

GTP is bound by residues 13–15 (LAG), Lys-26, Asp-72, and Asp-102. Residue Asp-102 coordinates Mg(2+).

This sequence belongs to the MobA family. Monomer. Mg(2+) serves as cofactor.

The protein localises to the cytoplasm. It catalyses the reaction Mo-molybdopterin + GTP + H(+) = Mo-molybdopterin guanine dinucleotide + diphosphate. Transfers a GMP moiety from GTP to Mo-molybdopterin (Mo-MPT) cofactor (Moco or molybdenum cofactor) to form Mo-molybdopterin guanine dinucleotide (Mo-MGD) cofactor. The protein is Molybdenum cofactor guanylyltransferase of Pseudomonas putida (strain ATCC 700007 / DSM 6899 / JCM 31910 / BCRC 17059 / LMG 24140 / F1).